A 524-amino-acid chain; its full sequence is Glucose-6-phosphate isomerase (524 aa).

The active-site Proton donor is Glu322. Residues His351 and Lys453 contribute to the active site.

The protein belongs to the GPI family.

The protein resides in the cytoplasm. It catalyses the reaction alpha-D-glucose 6-phosphate = beta-D-fructose 6-phosphate. It participates in carbohydrate biosynthesis; gluconeogenesis. It functions in the pathway carbohydrate degradation; glycolysis; D-glyceraldehyde 3-phosphate and glycerone phosphate from D-glucose: step 2/4. In terms of biological role, catalyzes the reversible isomerization of glucose-6-phosphate to fructose-6-phosphate. The chain is Glucose-6-phosphate isomerase from Prochlorococcus marinus (strain NATL2A).